A 308-amino-acid chain; its full sequence is Ribosomal protein L11 methyltransferase (308 aa).

The S-adenosyl-L-methionine site is built by Thr160, Gly181, Asp203, and Asn245.

Belongs to the methyltransferase superfamily. PrmA family.

Its subcellular location is the cytoplasm. It catalyses the reaction L-lysyl-[protein] + 3 S-adenosyl-L-methionine = N(6),N(6),N(6)-trimethyl-L-lysyl-[protein] + 3 S-adenosyl-L-homocysteine + 3 H(+). In terms of biological role, methylates ribosomal protein L11. The protein is Ribosomal protein L11 methyltransferase of Thermoanaerobacter sp. (strain X514).